The chain runs to 241 residues: Ribosomal RNA large subunit methyltransferase E (241 aa).

5 residues coordinate S-adenosyl-L-methionine: G88, W90, D111, D127, and D151. Residue K191 is the Proton acceptor of the active site.

Belongs to the class I-like SAM-binding methyltransferase superfamily. RNA methyltransferase RlmE family.

It localises to the cytoplasm. The enzyme catalyses uridine(2552) in 23S rRNA + S-adenosyl-L-methionine = 2'-O-methyluridine(2552) in 23S rRNA + S-adenosyl-L-homocysteine + H(+). Specifically methylates the uridine in position 2552 of 23S rRNA at the 2'-O position of the ribose in the fully assembled 50S ribosomal subunit. This Bartonella quintana (strain Toulouse) (Rochalimaea quintana) protein is Ribosomal RNA large subunit methyltransferase E.